The following is a 437-amino-acid chain: CCA-adding enzyme (437 aa).

ATP contacts are provided by serine 47 and arginine 50. CTP is bound by residues serine 47 and arginine 50. Mg(2+) contacts are provided by glutamate 59, aspartate 61, and aspartate 110. ATP-binding residues include histidine 133, lysine 152, and tyrosine 161. Positions 133, 152, and 161 each coordinate CTP.

Belongs to the tRNA nucleotidyltransferase/poly(A) polymerase family. Archaeal CCA-adding enzyme subfamily. As to quaternary structure, homodimer. Mg(2+) serves as cofactor.

The enzyme catalyses a tRNA precursor + 2 CTP + ATP = a tRNA with a 3' CCA end + 3 diphosphate. It catalyses the reaction a tRNA with a 3' CCA end + 2 CTP + ATP = a tRNA with a 3' CCACCA end + 3 diphosphate. Functionally, catalyzes the addition and repair of the essential 3'-terminal CCA sequence in tRNAs without using a nucleic acid template. Adds these three nucleotides in the order of C, C, and A to the tRNA nucleotide-73, using CTP and ATP as substrates and producing inorganic pyrophosphate. tRNA 3'-terminal CCA addition is required both for tRNA processing and repair. Also involved in tRNA surveillance by mediating tandem CCA addition to generate a CCACCA at the 3' terminus of unstable tRNAs. While stable tRNAs receive only 3'-terminal CCA, unstable tRNAs are marked with CCACCA and rapidly degraded. The structural flexibility of RNA controls the choice between CCA versus CCACCA addition: following the first CCA addition cycle, nucleotide-binding to the active site triggers a clockwise screw motion, producing torque on the RNA. This ejects stable RNAs, whereas unstable RNAs are refolded while bound to the enzyme and subjected to a second CCA catalytic cycle. This is CCA-adding enzyme from Archaeoglobus fulgidus (strain ATCC 49558 / DSM 4304 / JCM 9628 / NBRC 100126 / VC-16).